The chain runs to 138 residues: Cysteine desulfuration protein SufE (138 aa).

Cys51 (cysteine persulfide intermediate) is an active-site residue.

This sequence belongs to the SufE family. As to quaternary structure, homodimer. Interacts with SufS.

The protein localises to the cytoplasm. It participates in cofactor biosynthesis; iron-sulfur cluster biosynthesis. Its function is as follows. Participates in cysteine desulfuration mediated by SufS. Cysteine desulfuration mobilizes sulfur from L-cysteine to yield L-alanine and constitutes an essential step in sulfur metabolism for biosynthesis of a variety of sulfur-containing biomolecules. Functions as a sulfur acceptor for SufS, by mediating the direct transfer of the sulfur atom from the S-sulfanylcysteine of SufS, an intermediate product of cysteine desulfuration process. The protein is Cysteine desulfuration protein SufE of Escherichia coli O45:K1 (strain S88 / ExPEC).